Reading from the N-terminus, the 546-residue chain is Probable lysosomal cobalamin transporter (546 aa).

A run of 4 helical transmembrane segments spans residues 8 to 28, 48 to 68, 102 to 122, and 141 to 161; these read LAQGWIPFTVVVVLAILFSWF, IIALFIALMTTALVPVDIFLV, ILYALLAFFVFVIIPFMYFFF, and YSIGFLIVASVLLLVGAFAPL. N-linked (GlcNAc...) asparagine glycosylation is present at Asn-167. 4 helical membrane passes run 189 to 209, 304 to 324, 352 to 372, and 407 to 427; these read TALSLLIGFLTLIGMLIMITY, MVFGAFFLLVALLIFVSLFIT, IIMVYAQIVFPLDYCLFLLVV, and ALLFMCVMLMLIVLSLNVMLF. Residues Asn-444, Asn-452, and Asn-459 are each glycosylated (N-linked (GlcNAc...) asparagine). A helical transmembrane segment spans residues 495–515; that stretch reads VWFFGACYYWGTWLFLVVFMT.

The protein belongs to the LIMR family. LMBRD1 subfamily.

The protein resides in the lysosome membrane. Functionally, probable lysosomal cobalamin transporter. Required to export cobalamin from lysosomes allowing its conversion to cofactors. The protein is Probable lysosomal cobalamin transporter of Nematostella vectensis (Starlet sea anemone).